A 798-amino-acid polypeptide reads, in one-letter code: Protocadherin beta-2 (798 aa).

Positions M1–C30 are cleaved as a signal peptide. The Extracellular portion of the chain corresponds to Q31 to L692. 5 Cadherin domains span residues V37–F135, L136–F244, Y249–L349, L354–F453, and Y458–V563. N-linked (GlcNAc...) asparagine glycosylation is present at N171. Residue K299 is modified to N6-acetyllysine. 2 N-linked (GlcNAc...) asparagine glycosylation sites follow: N420 and N438. A glycan (N-linked (GlcNAc...) asparagine) is linked at N569. One can recognise a Cadherin 6 domain in the interval G570 to L673. The chain crosses the membrane as a helical span at residues V693–V713. Over R714–T798 the chain is Cytoplasmic.

It is found in the cell membrane. Its function is as follows. Potential calcium-dependent cell-adhesion protein. May be involved in the establishment and maintenance of specific neuronal connections in the brain. The chain is Protocadherin beta-2 (PCDHB2) from Homo sapiens (Human).